The sequence spans 473 residues: ATP synthase subunit beta (473 aa).

Position 158–165 (158–165 (GGAGVGKT)) interacts with ATP.

The protein belongs to the ATPase alpha/beta chains family. As to quaternary structure, F-type ATPases have 2 components, CF(1) - the catalytic core - and CF(0) - the membrane proton channel. CF(1) has five subunits: alpha(3), beta(3), gamma(1), delta(1), epsilon(1). CF(0) has three main subunits: a(1), b(2) and c(9-12). The alpha and beta chains form an alternating ring which encloses part of the gamma chain. CF(1) is attached to CF(0) by a central stalk formed by the gamma and epsilon chains, while a peripheral stalk is formed by the delta and b chains.

It localises to the cell membrane. The enzyme catalyses ATP + H2O + 4 H(+)(in) = ADP + phosphate + 5 H(+)(out). Produces ATP from ADP in the presence of a proton gradient across the membrane. The catalytic sites are hosted primarily by the beta subunits. The protein is ATP synthase subunit beta of Bacillus licheniformis (strain ATCC 14580 / DSM 13 / JCM 2505 / CCUG 7422 / NBRC 12200 / NCIMB 9375 / NCTC 10341 / NRRL NRS-1264 / Gibson 46).